The sequence spans 738 residues: Nucleoprotein (738 aa).

A coiled-coil region spans residues 334–363 (VNVGEQYQQLREAATEAEKQLQQYAETREL). Residues 418–640 (GDRYPDDNDI…QGSESEALPI (223 aa)) are disordered. Residues 461–476 (PYDDESNNYPDYEDSA) are compositionally biased toward acidic residues. Residues 544–564 (PGSNTNQPQGNMSSTLQSMTP) are compositionally biased toward polar residues. A compositionally biased stretch (acidic residues) spans 567–594 (EESEPDDQKDDDDESLTSLDSEGDEDVE). Residues 616 to 625 (VDTNQQNGPS) show a composition bias toward polar residues.

This sequence belongs to the filoviruses nucleoprotein family. As to quaternary structure, homooligomer. Homomultimerizes to form the nucleocapsid. Binds to viral genomic RNA. Interacts with VP35 and VP30 to form the nucleocapsid. Interacts with host PPP2R5C; this interaction leads to VP30 dephosphorylation and viral transcription. Interacts with VP24; this interaction facilitates nucleocapsid assembly and genome packaging. Interacts with matrix protein VP40; this interaction allows recruitment of the nucleocapsid into progeny virions. Interacts with host STAU1. Interacts with host NXF1 (via RNA-binding domain); this interaction recruits NXF1 to the inclusion bodies were viral replication takes place, probably to export viral mRNA-NXF1 complexes from these sites. Interacts with host CCDC92; this interaction sequesters NP in the host cytoplasm. Interacts with host TRIM14. Post-translationally, phosphorylated and O-glycosylated by host. Acetylated by host EP300 in vitro.

Its subcellular location is the virion. The protein resides in the host cytoplasm. In terms of biological role, oligomerizes into helical capsid to encapsidate the viral genome, protecting it from nucleases and the cellular innate immune response. VP35 binds to and stabilizes monomeric NP, keeping it soluble. Upon virus replication, NP is recruited to bind cooperatively viral genomic RNA and VP35 is released. The encapsidated genomic RNA is termed the nucleocapsid and serves as template for transcription and replication. The nucleocapsid is helical with a pitch of 10.81 NP per turn and a diameter of about 22nm. Each NP binds to six nucleotides of viral genomic RNA, three being exposed to the solvant and three hidden into the nucleocapsid. Also recruits host PPP2R5C phosphatase to dephosphorylate VP30 and thereby promote viral transcription. Upon virion assembly and budding, NP binds to VP24 and possibly host STAU1. The chain is Nucleoprotein (NP) from Sudan ebolavirus (strain Human/Uganda/Gulu/2000) (SEBOV).